The chain runs to 438 residues: uncharacterized protein (438 aa).

Disordered stretches follow at residues 1–22 and 156–264; these read MRDN…TYDP and DTAK…PWRP. Basic and acidic residues predominate over residues 156-170; the sequence is DTAKSNEKLQGDESK. Over residues 171-189 the composition is skewed to low complexity; it reads SSNGSSSTSTTTQRGSTNS. Residues 191 to 206 show a composition bias toward basic and acidic residues; the sequence is TKVKALKIEVKKKSDS.

The protein belongs to the adhesin P1 family.

This is an uncharacterized protein from Mycoplasma pneumoniae (strain ATCC 29342 / M129 / Subtype 1) (Mycoplasmoides pneumoniae).